A 159-amino-acid polypeptide reads, in one-letter code: Peripheral myelin protein 22 (159 aa).

Met1 is a topological domain (cytoplasmic). A helical membrane pass occupies residues 2–31 (LLLLLGIIVLHVAVLVLLFVATIVSQWIVG). Residues 32-64 (NGHATDLWQNCSTTSGNVQHCLSSSANEWLQSV) lie on the Extracellular side of the membrane. Asn41 is a glycosylation site (N-linked (GlcNAc...) asparagine). A helical membrane pass occupies residues 65–91 (QATMILSIIFSVLSLFLFFCQLFTLTK). At 92–95 (GGRF) the chain is on the cytoplasmic side. The chain crosses the membrane as a helical span at residues 96–119 (YITGIFQILAGLCVMSAASIYTVR). At 120–133 (HPEWHLDSAYSYGF) the chain is on the extracellular side. Residues 134–156 (AYILAWVAFPLALLSGVVYVILR) traverse the membrane as a helical segment. At 157–159 (KRE) the chain is on the cytoplasmic side.

The protein belongs to the PMP-22/EMP/MP20 family. In terms of processing, ubiquitinated by the DCX(DCAF13) E3 ubiquitin ligase complex, leading to its degradation.

The protein resides in the cell membrane. Might be involved in growth regulation, and in myelinization in the peripheral nervous system. This Equus caballus (Horse) protein is Peripheral myelin protein 22 (PMP22).